Here is a 125-residue protein sequence, read N- to C-terminus: Protein ApaG (125 aa).

The region spanning methionine 1–histidine 125 is the ApaG domain.

The sequence is that of Protein ApaG from Cronobacter sakazakii (strain ATCC BAA-894) (Enterobacter sakazakii).